The primary structure comprises 93 residues: Alpha-defensin 15 (93 aa).

The signal sequence occupies residues 1–19 (MKTLVLLSALVLLAFQVQA). A propeptide spanning residues 20–58 (DPIQNTDEETKTEEQPGEDDQAVSVSFGDPEGSSLQEES) is cleaved from the precursor. The disordered stretch occupies residues 23-56 (QNTDEETKTEEQPGEDDQAVSVSFGDPEGSSLQE). 3 disulfides stabilise this stretch: Cys-64–Cys-92, Cys-66–Cys-81, and Cys-71–Cys-91.

Belongs to the alpha-defensin family. Paneth cells of the small bowel.

The protein localises to the secreted. Its function is as follows. Probably contributes to the antimicrobial barrier function of the small bowel mucosa. The protein is Alpha-defensin 15 (Defa15) of Mus musculus (Mouse).